Consider the following 362-residue polypeptide: RING finger protein 32 (362 aa).

The RING-type 1; atypical zinc-finger motif lies at 127–169; the sequence is CPICKEEFELRPQVLLSCSHVFHKACLQAFEKFTNKKTCPLCR. The 30-residue stretch at 186 to 215 folds into the IQ domain; sequence RIKCVTRIQAYWRGCVVRKWYRNLRKTVPP. The RING-type 2; atypical zinc finger occupies 293–352; the sequence is CSICLAPLSAAGGQRVGAGRRSREMALLSCSHVFHHACLLALEEFSVGDRPPFHACPLCR.

Highly expressed in testis, less abundant in ovary.

The protein resides in the cytoplasm. In terms of biological role, may play a role in sperm formation. The chain is RING finger protein 32 (RNF32) from Homo sapiens (Human).